Reading from the N-terminus, the 439-residue chain is Acetyl esterase Axe7A (439 aa).

Residues 1–31 (MFNFAPKQTTEMKKLLFTLVFVLGSMATALA) form the signal peptide. Serine 309 acts as the Nucleophile in catalysis. Residues aspartate 391 and histidine 420 each act as charge relay system in the active site.

The protein belongs to the carbohydrate esterase 7 family.

Its pathway is glycan degradation; xylan degradation. In terms of biological role, involved in degradation of plant cell wall polysaccharides. Has acetyl esterase activity towards a broad range of substrates including xylose-tetraacetate, 4-O-methylumbelliferyl acetate, glucose-pentaacetate, cephalosporin C, and acetylated xylo-oligosaccharides smaller than xylo-heptaose. Displays no detectable activity on polymeric acetylated xylan. The protein is Acetyl esterase Axe7A of Xylanibacter ruminicola (strain ATCC 19189 / DSM 19721 / CIP 105475 / JCM 8958 / 23) (Prevotella ruminicola).